We begin with the raw amino-acid sequence, 82 residues long: MQTAYWVVVMMMMVWVTAPVSEGGKLSDVIWGLVPDDLTPQIILQILNASRHAYRRVRPRGQICIWKVCPPLPQWIHPLVKR.

The signal sequence occupies residues Met-1–Glu-22. The propeptide occupies Gly-23–Arg-60. Cys-64 and Cys-69 form a disulfide bridge. Trp-66 carries the D-tryptophan modification. 4-hydroxyproline is present on residues Pro-70, Pro-71, and Pro-73. Residues Gln-74–Arg-82 constitute a propeptide that is removed on maturation.

The protein belongs to the conotoxin C superfamily. Consomatin family. As to expression, expressed by the venom duct.

It is found in the secreted. Functionally, moderately activates human somatostatin receptors (SSTR) with a preferential activation of SSTR1 and SSTR4. In vivo, does not cause behavioral changes in mice within a few minutes of intracranial injection, but causes a progressive loss of movement thereafter. Four to five hours after injection, mice recover, even with the highest dose tested. Shows antinociception and antihyperalgesia activities in two mouse models of acute pain, most probably by acting outside the central nervous system. The protein is Consomatin Ar1 of Conus arenatus (Sand-dusted cone).